Reading from the N-terminus, the 56-residue chain is Large ribosomal subunit protein bL32 (56 aa).

The tract at residues 1 to 39 is disordered; the sequence is MAVQQNKKSRSKRGMRRSHDSLSTAQLSVDATSGELHRR. The span at 7-16 shows a compositional bias: basic residues; that stretch reads KKSRSKRGMR. Residues 21-31 are compositionally biased toward polar residues; it reads SLSTAQLSVDA.

The protein belongs to the bacterial ribosomal protein bL32 family.

The chain is Large ribosomal subunit protein bL32 from Shewanella piezotolerans (strain WP3 / JCM 13877).